The primary structure comprises 623 residues: Glutathione import ATP-binding protein GsiA (623 aa).

2 consecutive ABC transporter domains span residues 15–269 and 325–564; these read VSGL…QTLL and LRSG…RKLM. Residues 49–56 and 357–364 each bind ATP; these read GESGSGKS.

This sequence belongs to the ABC transporter superfamily. Glutathione importer (TC 3.A.1.5.11) family. The complex is composed of two ATP-binding proteins (GsiA), two transmembrane proteins (GsiC and GsiD) and a solute-binding protein (GsiB).

The protein localises to the cell inner membrane. It catalyses the reaction glutathione(out) + ATP + H2O = glutathione(in) + ADP + phosphate + H(+). Part of the ABC transporter complex GsiABCD involved in glutathione import. Responsible for energy coupling to the transport system. This is Glutathione import ATP-binding protein GsiA from Salmonella paratyphi A (strain ATCC 9150 / SARB42).